The chain runs to 33 residues: GFFALIPKIISSPLFKTLLSAVGSALSSSGEQE.

The protein belongs to the pardaxin family. As to quaternary structure, in aqueous solution exists as a tetramer.

The protein localises to the secreted. Its subcellular location is the target cell membrane. Functionally, exhibits unusual shark repellent and surfactant properties. Forms voltage-dependent, ion-permeable channels in membranes. At high concentration causes cell membrane lysis. Causes death in killfish oryzias latipes in 30 minutes at a concentration of 25 micrograms/ml. The polypeptide is Pardaxin P-1 (Pardachirus pavoninus (Peacock sole)).